We begin with the raw amino-acid sequence, 198 residues long: MFKVIHRYVGPASLSLLTFKVYASSKKDSPHKDTVKVNELSLYSVPEHQSKYVEEPRTQLEESISHLRHYCEPYTSWCQEKYSQNKPKIQSLVQWGLDSYEYLQNAPPGFFPRLGVIGFAGVVGLVLARGSKIKKLVYPPGFMGFAASLYYPQQAIVFVQVSGEKLYDWGLRGYIVVEDLWKENFQKSGNVKNSPGNK.

A signal peptide spans 1-25 (MFKVIHRYVGPASLSLLTFKVYASS). The chain crosses the membrane as a helical span at residues 108–128 (PGFFPRLGVIGFAGVVGLVLA). A glycan (O-linked (Xyl...) (chondroitin sulfate) serine) is linked at Ser-162.

It belongs to the apolipoprotein O/MICOS complex subunit Mic27 family. In terms of assembly, component of the mitochondrial contact site and cristae organizing system (MICOS) complex, composed of at least MICOS10/MIC10, CHCHD3/MIC19, CHCHD6/MIC25, APOOL/MIC27, IMMT/MIC60, APOO/MIC23/MIC26 and MICOS13/MIC13. This complex was also known under the names MINOS or MitOS complex. The MICOS complex associates with mitochondrial outer membrane proteins SAMM50, MTX1 and MTX2 (together described as components of the mitochondrial outer membrane sorting assembly machinery (SAM) complex) and DNAJC11, mitochondrial inner membrane protein TMEM11 and with HSPA9. The MICOS and SAM complexes together with DNAJC11 are part of a large protein complex spanning both membranes termed the mitochondrial intermembrane space bridging (MIB) complex. Interacts with IMMT/MIC60. Interacts with MICOS10/MIC10 and APOOL/MIC27. O-glycosylation; glycosaminoglycan of chondroitin-sulfate type.

It localises to the mitochondrion inner membrane. The protein localises to the secreted. The protein resides in the mitochondrion. It is found in the endoplasmic reticulum membrane. Its subcellular location is the golgi apparatus membrane. Component of the MICOS complex, a large protein complex of the mitochondrial inner membrane that plays crucial roles in the maintenance of crista junctions, inner membrane architecture, and formation of contact sites to the outer membrane. Plays a crucial role in crista junction formation and mitochondrial function. Can induce cardiac lipotoxicity by enhancing mitochondrial respiration and fatty acid metabolism in cardiac myoblasts. Promotes cholesterol efflux from macrophage cells. Detected in HDL, LDL and VLDL. Secreted by a microsomal triglyceride transfer protein (MTTP)-dependent mechanism, probably as a VLDL-associated protein that is subsequently transferred to HDL. This Bos taurus (Bovine) protein is MICOS complex subunit MIC26 (APOO).